We begin with the raw amino-acid sequence, 290 residues long: Nitrogenase iron protein 2 (290 aa).

An ATP-binding site is contributed by 10–17 (GKGGIGKS). Cys-98 is a binding site for [4Fe-4S] cluster. At Arg-101 the chain carries ADP-ribosylarginine; by dinitrogenase reductase ADP-ribosyltransferase. Cys-133 lines the [4Fe-4S] cluster pocket.

Belongs to the NifH/BchL/ChlL family. As to quaternary structure, homodimer. Requires [4Fe-4S] cluster as cofactor. In terms of processing, the reversible ADP-ribosylation of Arg-101 inactivates the nitrogenase reductase and regulates nitrogenase activity.

The enzyme catalyses N2 + 8 reduced [2Fe-2S]-[ferredoxin] + 16 ATP + 16 H2O = H2 + 8 oxidized [2Fe-2S]-[ferredoxin] + 2 NH4(+) + 16 ADP + 16 phosphate + 6 H(+). In terms of biological role, the key enzymatic reactions in nitrogen fixation are catalyzed by the nitrogenase complex, which has 2 components: the iron protein (component 2) and a component 1 which is either a molybdenum-iron protein, a vanadium-iron, or an iron-iron protein. This chain is Nitrogenase iron protein 2 (vnfH), found in Azotobacter chroococcum mcd 1.